Reading from the N-terminus, the 223-residue chain is Ribose-5-phosphate isomerase A (223 aa).

Residues 28-31 (TGST), 81-84 (DGAD), and 94-97 (KGGG) each bind substrate. E103 (proton acceptor) is an active-site residue. A substrate-binding site is contributed by K121.

Belongs to the ribose 5-phosphate isomerase family. In terms of assembly, homodimer.

It catalyses the reaction aldehydo-D-ribose 5-phosphate = D-ribulose 5-phosphate. Its pathway is carbohydrate degradation; pentose phosphate pathway; D-ribose 5-phosphate from D-ribulose 5-phosphate (non-oxidative stage): step 1/1. Its function is as follows. Catalyzes the reversible conversion of ribose-5-phosphate to ribulose 5-phosphate. This chain is Ribose-5-phosphate isomerase A, found in Janthinobacterium sp. (strain Marseille) (Minibacterium massiliensis).